Reading from the N-terminus, the 249-residue chain is Triosephosphate isomerase (249 aa).

9 to 11 (NWK) contacts substrate. Residue H91 is the Electrophile of the active site. E163 serves as the catalytic Proton acceptor. Residues G169, S209, and 230–231 (GG) each bind substrate.

The protein belongs to the triosephosphate isomerase family. As to quaternary structure, homodimer.

It is found in the cytoplasm. It carries out the reaction D-glyceraldehyde 3-phosphate = dihydroxyacetone phosphate. The protein operates within carbohydrate biosynthesis; gluconeogenesis. Its pathway is carbohydrate degradation; glycolysis; D-glyceraldehyde 3-phosphate from glycerone phosphate: step 1/1. Its function is as follows. Involved in the gluconeogenesis. Catalyzes stereospecifically the conversion of dihydroxyacetone phosphate (DHAP) to D-glyceraldehyde-3-phosphate (G3P). This is Triosephosphate isomerase from Halorhodospira halophila (strain DSM 244 / SL1) (Ectothiorhodospira halophila (strain DSM 244 / SL1)).